The sequence spans 193 residues: Probable chemoreceptor glutamine deamidase CheD 1 (193 aa).

The tract at residues 1 to 26 is disordered; that stretch reads MPHTPPAYPAASADHRPPSSPPAEPA.

It belongs to the CheD family.

The catalysed reaction is L-glutaminyl-[protein] + H2O = L-glutamyl-[protein] + NH4(+). Its function is as follows. Probably deamidates glutamine residues to glutamate on methyl-accepting chemotaxis receptors (MCPs), playing an important role in chemotaxis. The chain is Probable chemoreceptor glutamine deamidase CheD 1 from Chromobacterium violaceum (strain ATCC 12472 / DSM 30191 / JCM 1249 / CCUG 213 / NBRC 12614 / NCIMB 9131 / NCTC 9757 / MK).